The primary structure comprises 199 residues: Probable DNA-directed RNA polymerase subunit delta (199 aa).

The HTH HARE-type domain maps to 14 to 81 (LSLIEVAHAI…GDNMWGLRAW (68 aa)). 3 stretches are compositionally biased toward acidic residues: residues 116–147 (GDDD…DTDD), 157–171 (AGVD…DETL), and 182–199 (LNDD…DESK). The disordered stretch occupies residues 116 to 199 (GDDDDVIDYD…DYDDEDDESK (84 aa)).

It belongs to the RpoE family. RNAP is composed of a core of 2 alpha, a beta and a beta' subunits. The core is associated with a delta subunit and one of several sigma factors.

Participates in both the initiation and recycling phases of transcription. In the presence of the delta subunit, RNAP displays an increased specificity of transcription, a decreased affinity for nucleic acids, and an increased efficiency of RNA synthesis because of enhanced recycling. This Lactiplantibacillus plantarum (strain ATCC BAA-793 / NCIMB 8826 / WCFS1) (Lactobacillus plantarum) protein is Probable DNA-directed RNA polymerase subunit delta.